A 68-amino-acid polypeptide reads, in one-letter code: Conotoxin Vx2 (68 aa).

The first 20 residues, 1-20 (MMSKLGVLVTICLLLFPLTA), serve as a signal peptide directing secretion. The propeptide occupies 21 to 47 (LPLDGDQPADHPAKRTQDHNLASPISA). Cystine bridges form between Cys-55/Cys-68, Cys-56/Cys-61, and Cys-57/Cys-65.

Belongs to the conotoxin M superfamily. Expressed by the venom duct.

The protein localises to the secreted. Functionally, in vivo, elicits a series of symptoms, such as being sedative, tail stiffening and twisted jumping, when injected intracranially into mice. The polypeptide is Conotoxin Vx2 (Conus vexillum (Flag cone)).